A 174-amino-acid polypeptide reads, in one-letter code: MGARMTRAFRNFNVEKRAEQEISKRKPSMAPKHPSTRSLLQEHLSQYPEIEEEVSRKDNKLLSLLRDVYVNSKDPVPSLPVKAIEPQQQPKEFRLPIGDQFDKNIKDIPKGKITVVEALTLLNNHKLSPETWTAEKIAQEYHLELEDVNSLLKYFVTFEVKIVPPEDRKAIQSK.

A lipid anchor (N-myristoyl glycine) is attached at G2. Residues 15–24 are compositionally biased toward basic and acidic residues; the sequence is EKRAEQEISK. The segment at 15-38 is disordered; sequence EKRAEQEISKRKPSMAPKHPSTRS. A Phosphoserine modification is found at S35.

It belongs to the NDUFAF4 family. As to quaternary structure, binds calmodulin. Interacts with NDUFAF3. In terms of processing, phosphorylated on serine. Prolactin stimulate serine phosphorylation.

Its subcellular location is the mitochondrion. It is found in the membrane. May be involved in cell proliferation and survival of hormone-dependent tumor cells. Involved in the assembly of mitochondrial NADH:ubiquinone oxidoreductase complex (complex I). The polypeptide is NADH dehydrogenase [ubiquinone] 1 alpha subcomplex assembly factor 4 (Ndufaf4) (Rattus norvegicus (Rat)).